Consider the following 543-residue polypeptide: Alanine aminotransferase 1, mitochondrial (543 aa).

The N-terminal 55 residues, 1-55 (MRRFVIGQAKNLIDQSRRRQLHHHKNLSFVSLIPPFSAPSDSSSRHLSSSSSSDM), are a transit peptide targeting the mitochondrion. Residues 43–63 (SSRHLSSSSSSDMSASDSSSS) are compositionally biased toward low complexity. Residues 43–64 (SSRHLSSSSSSDMSASDSSSSL) form a disordered region. Serine 56 carries the N-acetylserine modification. Pyridoxal 5'-phosphate contacts are provided by residues tyrosine 173, 209–210 (AS), tyrosine 235, asparagine 291, tyrosine 322, and 354–356 (SFQ). Lysine 360 carries the post-translational modification N6-(pyridoxal phosphate)lysine. Positions 369 and 397 each coordinate pyridoxal 5'-phosphate.

It belongs to the class-I pyridoxal-phosphate-dependent aminotransferase family. Alanine aminotransferase subfamily. As to quaternary structure, homodimer. The cofactor is pyridoxal 5'-phosphate. In terms of processing, the N-terminus is blocked. Mostly expressed in roots and shoots, mostly in vascular tissues, and, to a lower extent, in flowers and leaves.

It localises to the mitochondrion. The enzyme catalyses L-alanine + 2-oxoglutarate = pyruvate + L-glutamate. Its pathway is photosynthesis; C4 acid pathway. It participates in amino-acid degradation; L-alanine degradation via transaminase pathway; pyruvate from L-alanine: step 1/1. Is the major alanine aminotransferase in roots that catalyzes the conversion of alanine to pyruvate. Involved in the rapid conversion of alanine to pyruvate during recovery from low-oxygen stress. The polypeptide is Alanine aminotransferase 1, mitochondrial (Arabidopsis thaliana (Mouse-ear cress)).